Reading from the N-terminus, the 159-residue chain is Histone H2A (159 aa).

Residues 1–10 (MDSTGTGAGG) show a composition bias toward gly residues. 2 disordered regions span residues 1-31 (MDSTGTGAGGKGKKGAAGRKVGGPRKKSVSR) and 133-159 (KTAEKASSGGSKEAKSPKKAAKSPKKA). 2 stretches are compositionally biased toward basic residues: residues 11 to 29 (KGKKGAAGRKVGGPRKKSV) and 149 to 159 (PKKAAKSPKKA). 2 short sequence motifs (SPKK motif) span residues 148-151 (SPKK) and 155-158 (SPKK).

This sequence belongs to the histone H2A family. The nucleosome is a histone octamer containing two molecules each of H2A, H2B, H3 and H4 assembled in one H3-H4 heterotetramer and two H2A-H2B heterodimers. The octamer wraps approximately 147 bp of DNA.

The protein localises to the nucleus. It localises to the chromosome. In terms of biological role, core component of nucleosome. Nucleosomes wrap and compact DNA into chromatin, limiting DNA accessibility to the cellular machineries which require DNA as a template. Histones thereby play a central role in transcription regulation, DNA repair, DNA replication and chromosomal stability. DNA accessibility is regulated via a complex set of post-translational modifications of histones, also called histone code, and nucleosome remodeling. This is Histone H2A from Zea mays (Maize).